A 184-amino-acid chain; its full sequence is Dual-action ribosomal maturation protein DarP (184 aa).

Residues 1 to 21 form a disordered region; the sequence is MYKHPDEEWLDEIPGQQENED.

It belongs to the DarP family.

The protein localises to the cytoplasm. Member of a network of 50S ribosomal subunit biogenesis factors which assembles along the 30S-50S interface, preventing incorrect 23S rRNA structures from forming. Promotes peptidyl transferase center (PTC) maturation. The polypeptide is Dual-action ribosomal maturation protein DarP (Edwardsiella ictaluri (strain 93-146)).